The primary structure comprises 208 residues: Thymidylate kinase (208 aa).

ATP is bound at residue 13-20 (GLEGAGKS).

This sequence belongs to the thymidylate kinase family.

It catalyses the reaction dTMP + ATP = dTDP + ADP. Its function is as follows. Phosphorylation of dTMP to form dTDP in both de novo and salvage pathways of dTTP synthesis. The protein is Thymidylate kinase of Shewanella amazonensis (strain ATCC BAA-1098 / SB2B).